The sequence spans 185 residues: Ribosome-recycling factor (185 aa).

It belongs to the RRF family.

The protein localises to the cytoplasm. Responsible for the release of ribosomes from messenger RNA at the termination of protein biosynthesis. May increase the efficiency of translation by recycling ribosomes from one round of translation to another. The polypeptide is Ribosome-recycling factor (Thermotoga sp. (strain RQ2)).